A 196-amino-acid polypeptide reads, in one-letter code: Probable peptidyl-prolyl cis-trans isomerase (196 aa).

Positions 1–26 (MSFIRSALAAAAFVALSIGAVQTASA) are cleaved as a signal peptide. Positions 29–194 (PENTVILKLK…KIIKATIEAD (166 aa)) constitute a PPIase cyclophilin-type domain.

It belongs to the cyclophilin-type PPIase family.

It localises to the periplasm. It carries out the reaction [protein]-peptidylproline (omega=180) = [protein]-peptidylproline (omega=0). PPIases accelerate the folding of proteins. It catalyzes the cis-trans isomerization of proline imidic peptide bonds in oligopeptides. The protein is Probable peptidyl-prolyl cis-trans isomerase (ppi) of Brucella abortus (strain 2308).